We begin with the raw amino-acid sequence, 412 residues long: Phosphate-repressible acid phosphatase (412 aa).

Residues 1–19 form the signal peptide; that stretch reads MLTKQTLLAFVGALALATG. Residues Asn-74, Asn-121, Asn-186, and Asn-208 are each glycosylated (N-linked (GlcNAc...) asparagine). The active-site Proton donor is Asp-215. 3 N-linked (GlcNAc...) asparagine glycosylation sites follow: Asn-217, Asn-332, and Asn-343.

The N-terminus is blocked.

Its subcellular location is the secreted. The enzyme catalyses a phosphate monoester + H2O = an alcohol + phosphate. The sequence is that of Phosphate-repressible acid phosphatase (PHOA) from Penicillium chrysogenum (Penicillium notatum).